The primary structure comprises 341 residues: NADH-quinone oxidoreductase subunit H (341 aa).

Helical transmembrane passes span 38-58, 70-90, 115-135, 161-181, 187-207, 239-259, 275-295, and 314-334; these read PSVV…KLLV, ILFI…WAVI, IGVL…IVAG, MGLI…GEMV, MPFW…ISLL, LFFL…TIFF, IPGL…FVWT, and VFLP…LFTG.

It belongs to the complex I subunit 1 family. NDH-1 is composed of 14 different subunits. Subunits NuoA, H, J, K, L, M, N constitute the membrane sector of the complex.

Its subcellular location is the cell membrane. It carries out the reaction a quinone + NADH + 5 H(+)(in) = a quinol + NAD(+) + 4 H(+)(out). NDH-1 shuttles electrons from NADH, via FMN and iron-sulfur (Fe-S) centers, to quinones in the respiratory chain. The immediate electron acceptor for the enzyme in this species is believed to be ubiquinone. Couples the redox reaction to proton translocation (for every two electrons transferred, four hydrogen ions are translocated across the cytoplasmic membrane), and thus conserves the redox energy in a proton gradient. This subunit may bind ubiquinone. The polypeptide is NADH-quinone oxidoreductase subunit H (Wolbachia sp. subsp. Brugia malayi (strain TRS)).